Here is a 1781-residue protein sequence, read N- to C-terminus: Chitin synthase 7 (1781 aa).

N-linked (GlcNAc...) asparagine glycans are attached at residues Asn-133, Asn-534, Asn-629, Asn-644, Asn-655, and Asn-660. The next 2 membrane-spanning stretches (helical) occupy residues 741–761 and 777–797; these read AWVA…LKFV and LVLF…IIGF. N-linked (GlcNAc...) asparagine glycans are attached at residues Asn-889 and Asn-1011. The helical transmembrane segment at 1048 to 1068 threads the bilayer; sequence LLLAFAIIICIVTAVKFLAAL. Residue Asn-1413 is glycosylated (N-linked (GlcNAc...) asparagine). The next 3 helical transmembrane spans lie at 1444 to 1464, 1471 to 1491, and 1499 to 1519; these read LTGT…IYVL, IPYI…LIFI, and IGWM…LPLY. N-linked (GlcNAc...) asparagine glycosylation is present at Asn-1526. Residues 1677 to 1712 form a disordered region; that stretch reads QANLSPAAGGGHSRSGTALGFSSGSRSPMPDAMRSQ. The span at 1690-1702 shows a compositional bias: polar residues; sequence RSGTALGFSSGSR. Positions 1723–1779 constitute a DEK-C domain; that stretch reads GPTDMAIVESIRSVLCEVDLDTVTKKQVRALVEQRLQTELVGERRTFMDRQIDHELE.

It belongs to the chitin synthase family. Class V subfamily.

It is found in the cell membrane. It catalyses the reaction [(1-&gt;4)-N-acetyl-beta-D-glucosaminyl](n) + UDP-N-acetyl-alpha-D-glucosamine = [(1-&gt;4)-N-acetyl-beta-D-glucosaminyl](n+1) + UDP + H(+). Its function is as follows. Polymerizes chitin, a structural polymer of the cell wall and septum, by transferring the sugar moiety of UDP-GlcNAc to the non-reducing end of the growing chitin polymer. Shows additive effects in septum formation with CHS1, CHS2, CHS3A, CHS4, CHS5 and CHS6. Indispensable for perithecia formation and regulates conidiation. Plays an important role in the response to cell wall stress. Also required for hyphal growth and pathogenicity. In Gibberella zeae (strain ATCC MYA-4620 / CBS 123657 / FGSC 9075 / NRRL 31084 / PH-1) (Wheat head blight fungus), this protein is Chitin synthase 7.